Consider the following 188-residue polypeptide: dCTP deaminase (188 aa).

Residues 111–116 (KSTYAR), 135–137 (TLE), Gln-156, Tyr-170, and Gln-180 contribute to the dCTP site. Catalysis depends on Glu-137, which acts as the Proton donor/acceptor.

This sequence belongs to the dCTP deaminase family. Homotrimer.

It catalyses the reaction dCTP + H2O + H(+) = dUTP + NH4(+). It participates in pyrimidine metabolism; dUMP biosynthesis; dUMP from dCTP (dUTP route): step 1/2. Catalyzes the deamination of dCTP to dUTP. The protein is dCTP deaminase of Pseudomonas putida (strain GB-1).